A 2564-amino-acid polypeptide reads, in one-letter code: Spectrin beta chain, non-erythrocytic 4 (2564 aa).

The tract at residues 1-37 (MAQVPGEVDNMEGLPAPNNNPAARWESPDRGWEREQP) is disordered. An actin-binding region spans residues 1–282 (MAQVPGEVDN…IITYVVSFYH (282 aa)). The segment covering 26 to 36 (ESPDRGWEREQ) has biased composition (basic and acidic residues). 2 Calponin-homology (CH) domains span residues 61 to 165 (AVQK…LRFQ) and 180 to 285 (RSAK…HYFS). 14 Spectrin repeats span residues 311 to 418 (IERY…AALR), 430 to 533 (LAQR…RLEQ), 536 to 641 (ALQK…AELE), 774 to 879 (ALHQ…WLRD), 884 to 982 (YRMF…RKEE), 1089 to 1196 (RLQR…EALV), 1306 to 1407 (ELQH…RQLF), 1412 to 1512 (ADQL…RLLL), 1515 to 1617 (KELH…QQVL), 1623 to 1725 (VEQY…ALEQ), 1728 to 1830 (WLYQ…AQLL), 1835 to 1935 (ELHK…EDAR), 1944 to 2046 (ALRF…WLQQ), and 2049 to 2123 (EVHQ…QSKQ). The tract at residues 1853-1872 (KRRRLPRLTTPPEPRPSASS) is disordered. Residues 2208–2225 (PAAPEDAAETPATPAAAE) are compositionally biased toward low complexity. 2 disordered regions span residues 2208–2439 (PAAP…KSSN) and 2533–2564 (ARWG…GRRK). 3 stretches are compositionally biased toward basic and acidic residues: residues 2227-2254 (VRPR…RQES), 2268-2278 (ERQESAEHEAA), and 2287-2318 (EQME…DLVK). A compositionally biased stretch (pro residues) spans 2343–2355 (PSLPQPRELPPGR). Composition is skewed to basic and acidic residues over residues 2362 to 2377 (LPER…ARDR) and 2424 to 2435 (FLLRKRELDANR). The PH domain occupies 2418–2527 (TVQHEGFLLR…WLEAVASSVA (110 aa)). A compositionally biased stretch (polar residues) spans 2538-2547 (TLPTTSSTDE). The span at 2548 to 2564 (GNPKREGGDRRASGRRK) shows a compositional bias: basic and acidic residues.

It belongs to the spectrin family. As to expression, expressed in skeletal muscle at the sarcolemma and in the muscle capillaries (at protein level). Abundantly expressed in brain and pancreatic islets.

It localises to the cytoplasm. It is found in the cytoskeleton. The protein localises to the cell cortex. The protein is Spectrin beta chain, non-erythrocytic 4 (SPTBN4) of Homo sapiens (Human).